Here is a 231-residue protein sequence, read N- to C-terminus: MSQYQEIAKQGLWHNNPGLVQLLGLCPLLAVTATVTNALGLGFATLLVLVGSNMLVSLVRDYVPKEIRIPVFVMIIAALVTSVQLLINAYAYGLYLSLGIFLPLIVTNCVIIGRAEAFASRNNLAHSAFDGLMMGIGFTCVLVVLGAGRELLGQGTLFEGADLLLGDWAKALVMQVWQVDTPFLLALLPPGAFIGMGLLIAGKNVIDARLKARQPKTQAEPVARVRITKVS.

The next 6 helical transmembrane spans lie at 18–38 (GLVQLLGLCPLLAVTATVTNA), 39–59 (LGLGFATLLVLVGSNMLVSLV), 69–89 (IPVFVMIIAALVTSVQLLINA), 93–113 (GLYLSLGIFLPLIVTNCVIIG), 128–148 (AFDGLMMGIGFTCVLVVLGAG), and 182–202 (PFLLALLPPGAFIGMGLLIAG).

Belongs to the NqrDE/RnfAE family. As to quaternary structure, the complex is composed of six subunits: RnfA, RnfB, RnfC, RnfD, RnfE and RnfG.

It is found in the cell inner membrane. In terms of biological role, part of a membrane-bound complex that couples electron transfer with translocation of ions across the membrane. In Shewanella denitrificans (strain OS217 / ATCC BAA-1090 / DSM 15013), this protein is Ion-translocating oxidoreductase complex subunit E.